The chain runs to 459 residues: Cysteine--tRNA ligase (459 aa).

Cys29 is a Zn(2+) binding site. A 'HIGH' region motif is present at residues 31-41; sequence PTVYDRAHIGN. Zn(2+) is bound by residues Cys209, His234, and Glu238. The short motif at 266-270 is the 'KMSKS' region element; sequence KMSKS. Lys269 provides a ligand contact to ATP.

This sequence belongs to the class-I aminoacyl-tRNA synthetase family. As to quaternary structure, monomer. Requires Zn(2+) as cofactor.

The protein resides in the cytoplasm. It catalyses the reaction tRNA(Cys) + L-cysteine + ATP = L-cysteinyl-tRNA(Cys) + AMP + diphosphate. The sequence is that of Cysteine--tRNA ligase from Paramagnetospirillum magneticum (strain ATCC 700264 / AMB-1) (Magnetospirillum magneticum).